Reading from the N-terminus, the 313-residue chain is D-alanine--D-alanine ligase (313 aa).

Residues K111–A306 enclose the ATP-grasp domain. A137–T192 serves as a coordination point for ATP. D260, E273, and N275 together coordinate Mg(2+).

This sequence belongs to the D-alanine--D-alanine ligase family. Mg(2+) is required as a cofactor. Requires Mn(2+) as cofactor.

The protein resides in the cytoplasm. The catalysed reaction is 2 D-alanine + ATP = D-alanyl-D-alanine + ADP + phosphate + H(+). The protein operates within cell wall biogenesis; peptidoglycan biosynthesis. In terms of biological role, cell wall formation. This Ectopseudomonas mendocina (strain ymp) (Pseudomonas mendocina) protein is D-alanine--D-alanine ligase.